The sequence spans 513 residues: Carboxyethyl-arginine beta-lactam-synthase (513 aa).

The Mg(2+) site is built by D253 and D351.

This sequence belongs to the asparagine synthetase family. As to quaternary structure, homodimer. It depends on Mg(2+) as a cofactor.

It carries out the reaction N(2)-(2-carboxyethyl)-L-arginine + ATP = deoxyamidinoproclavaminate + AMP + diphosphate + H(+). It participates in antibiotic biosynthesis; clavulanate biosynthesis; clavulanate from D-glyceraldehyde 3-phosphate and L-arginine: step 2/8. The chain is Carboxyethyl-arginine beta-lactam-synthase (bls) from Streptomyces clavuligerus.